A 157-amino-acid chain; its full sequence is SsrA-binding protein (157 aa).

Positions 133-157 (LHDKRESEKKRDWGREKGRLLRARG) are disordered. The span at 135–151 (DKRESEKKRDWGREKGR) shows a compositional bias: basic and acidic residues.

The protein belongs to the SmpB family.

The protein localises to the cytoplasm. In terms of biological role, required for rescue of stalled ribosomes mediated by trans-translation. Binds to transfer-messenger RNA (tmRNA), required for stable association of tmRNA with ribosomes. tmRNA and SmpB together mimic tRNA shape, replacing the anticodon stem-loop with SmpB. tmRNA is encoded by the ssrA gene; the 2 termini fold to resemble tRNA(Ala) and it encodes a 'tag peptide', a short internal open reading frame. During trans-translation Ala-aminoacylated tmRNA acts like a tRNA, entering the A-site of stalled ribosomes, displacing the stalled mRNA. The ribosome then switches to translate the ORF on the tmRNA; the nascent peptide is terminated with the 'tag peptide' encoded by the tmRNA and targeted for degradation. The ribosome is freed to recommence translation, which seems to be the essential function of trans-translation. The polypeptide is SsrA-binding protein (Bradyrhizobium sp. (strain ORS 278)).